The primary structure comprises 56 residues: Large ribosomal subunit protein bL32 (56 aa).

The interval 1-26 (MAVQQNKKSRSKRGMRRSHDALSTAQ) is disordered. Residues 7-16 (KKSRSKRGMR) show a composition bias toward basic residues.

It belongs to the bacterial ribosomal protein bL32 family.

This Shewanella baltica (strain OS155 / ATCC BAA-1091) protein is Large ribosomal subunit protein bL32.